The primary structure comprises 346 residues: D-erythrose-4-phosphate dehydrogenase (346 aa).

11 to 12 (RI) is a binding site for NAD(+). Substrate-binding positions include 163-165 (SCT), arginine 209, 222-223 (TK), and arginine 245. Residue cysteine 164 is the Nucleophile of the active site. Asparagine 327 contacts NAD(+).

It belongs to the glyceraldehyde-3-phosphate dehydrogenase family. Epd subfamily. In terms of assembly, homotetramer.

It localises to the cytoplasm. The enzyme catalyses D-erythrose 4-phosphate + NAD(+) + H2O = 4-phospho-D-erythronate + NADH + 2 H(+). It functions in the pathway cofactor biosynthesis; pyridoxine 5'-phosphate biosynthesis; pyridoxine 5'-phosphate from D-erythrose 4-phosphate: step 1/5. Functionally, catalyzes the NAD-dependent conversion of D-erythrose 4-phosphate to 4-phosphoerythronate. The protein is D-erythrose-4-phosphate dehydrogenase of Vibrio vulnificus (strain CMCP6).